The primary structure comprises 118 residues: Large ribosomal subunit protein uL18 (118 aa).

This sequence belongs to the universal ribosomal protein uL18 family. In terms of assembly, part of the 50S ribosomal subunit; part of the 5S rRNA/L5/L18/L25 subcomplex. Contacts the 5S and 23S rRNAs.

Functionally, this is one of the proteins that bind and probably mediate the attachment of the 5S RNA into the large ribosomal subunit, where it forms part of the central protuberance. The polypeptide is Large ribosomal subunit protein uL18 (Mycoplasmopsis pulmonis (strain UAB CTIP) (Mycoplasma pulmonis)).